Reading from the N-terminus, the 687-residue chain is Ataxin-1-like (687 aa).

The segment covering 1 to 19 (MKPVHERSQECLPPKKRDL) has biased composition (basic and acidic residues). 3 disordered regions span residues 1–46 (MKPV…SEWS), 185–223 (ATPPPQAASPAQSFNKSSSATSPPGQLPHHSNTQPLDLA), and 261–294 (SALEAAAANGQRQRERNVRRESEALDSASSKGES). The segment at 20-197 (PVTSEDMGRT…PPQAASPAQS (178 aa)) is interaction with NCOR2 and ATXN1. Residues 20–197 (PVTSEDMGRT…PPQAASPAQS (178 aa)) are self-association. Polar residues-rich tracts occupy residues 28-43 (RTTSCSTNHTPSSDAS) and 198-219 (FNKSSSATSPPGQLPHHSNTQP). Residues 272 to 283 (RQRERNVRRESE) are compositionally biased toward basic and acidic residues. S282 is modified (phosphoserine). A Phosphothreonine modification is found at T328. A disordered region spans residues 356–379 (DEPSPLNLSHHNLDHQGEGRGSAR). S359 carries the post-translational modification Phosphoserine. The AXH domain maps to 455–586 (PPPVTSSHLP…SISLQSLNSN (132 aa)). Residues 587–649 (SVSQASCAPP…PGAQACWPAP (63 aa)) form a disordered region.

The protein belongs to the ATXN1 family. In terms of assembly, homodimer. Interacts (via AXH domain) with NCOR2. Interacts with ATXN1 and CIC. Directly interacts with RBPJ; this interaction is disrupted in the presence of Notch intracellular domain. Competes with ATXN1 for RBPJ-binding. Found in a complex with CIC and ATXN1. Expressed in the cortex and hypothalamus (at protein level). Expressed in neuronal cells. Highly expressed in Purkinje cells of cerebellum.

It is found in the nucleus. It localises to the cell projection. Its subcellular location is the dendrite. Its function is as follows. Chromatin-binding factor that repress Notch signaling in the absence of Notch intracellular domain by acting as a CBF1 corepressor. Binds to the HEY promoter and might assist, along with NCOR2, RBPJ-mediated repression. Can suppress the cytotoxicity of ATXN1 in spinocerebellar ataxia type 1 (SCA1). In concert with CIC and ATXN1, involved in brain development. This Mus musculus (Mouse) protein is Ataxin-1-like (Atxn1l).